Consider the following 391-residue polypeptide: Nucleosome assembly protein 1-like 1 (391 aa).

Residues 1–10 show a composition bias toward basic and acidic residues; it reads MADIDNKEQS. The tract at residues 1 to 32 is disordered; sequence MADIDNKEQSELDQDLDDVEEVEEEETGEETK. At A2 the chain carries N-acetylalanine. S10 is modified (phosphoserine). A compositionally biased stretch (acidic residues) spans 11 to 28; sequence ELDQDLDDVEEVEEEETG. T62 and T64 each carry phosphothreonine. Position 69 is a phosphoserine (S69). The residue at position 116 (K116) is an N6-acetyllysine. An NAP1L motif motif is present at residues 125–150; sequence YEPTEEECEWKPDEEDEISEELKEKA. Positions 132–143 are enriched in acidic residues; that stretch reads CEWKPDEEDEIS. Positions 132–163 are disordered; it reads CEWKPDEEDEISEELKEKAKVEDEKKDEEKED. Phosphoserine is present on S143. Positions 144–163 are enriched in basic and acidic residues; that stretch reads EELKEKAKVEDEKKDEEKED. The Nuclear localization signal motif lies at 273–279; that stretch reads IKKKQKH. The interval 345–391 is disordered; sequence EAIEDDDDDYDEEGEEADEEGEEEGDEENDPDYDPKKDQNPAECKQQ. Over residues 346–376 the composition is skewed to acidic residues; the sequence is AIEDDDDDYDEEGEEADEEGEEEGDEENDPD. A 5-glutamyl polyglycine mark is found at E359 and E360. Over residues 377–391 the composition is skewed to basic and acidic residues; the sequence is YDPKKDQNPAECKQQ. C388 carries the post-translational modification Cysteine methyl ester. The S-farnesyl cysteine moiety is linked to residue C388. The propeptide at 389–391 is removed in mature form; that stretch reads KQQ.

The protein belongs to the nucleosome assembly protein (NAP) family. Homodimer. The dimer binds strongly and sequentially to single and double H2A-H2B heterodimers. Interacts with ERCC6; this interaction increases ERCC6 processivity. Interacts with RAD54. Interacts with SETD1A. Polyglycylated by TTLL10 on glutamate residues, resulting in polyglycine chains on the gamma-carboxyl group. Both polyglutamylation and polyglycylation modifications can coexist on the same protein on adjacent residues, and lowering polyglycylation levels increases polyglutamylation, and reciprocally. In terms of processing, polyglutamylated by TTLL4 on glutamate residues, resulting in polyglutamate chains on the gamma-carboxyl group. Both polyglutamylation and polyglycylation modifications can coexist on the same protein on adjacent residues, and lowering polyglycylation levels increases polyglutamylation, and reciprocally.

The protein resides in the nucleus. It is found in the melanosome. It localises to the cytoplasm. Its function is as follows. Histone chaperone that plays a role in the nuclear import of H2A-H2B and nucleosome assembly. Also participates in several important DNA repair mechanisms: greatly enhances ERCC6-mediated chromatin remodeling which is essential for transcription-coupled nucleotide excision DNA repair. Also stimulates homologous recombination (HR) by RAD51 and RAD54 which is essential in mitotic DNA double strand break (DSB) repair. Plays a key role in the regulation of embryonic neurogenesis. Promotes the proliferation of neural progenitors and inhibits neuronal differentiation during cortical development. Regulates neurogenesis via the modulation of RASSF10; regulates RASSF10 expression by promoting SETD1A-mediated H3K4 methylation at the RASSF10 promoter. The sequence is that of Nucleosome assembly protein 1-like 1 (NAP1L1) from Bos taurus (Bovine).